The chain runs to 496 residues: Probable malate:quinone oxidoreductase (496 aa).

Belongs to the MQO family. FAD serves as cofactor.

It carries out the reaction (S)-malate + a quinone = a quinol + oxaloacetate. It functions in the pathway carbohydrate metabolism; tricarboxylic acid cycle; oxaloacetate from (S)-malate (quinone route): step 1/1. In Prochlorococcus marinus (strain NATL1A), this protein is Probable malate:quinone oxidoreductase.